Reading from the N-terminus, the 496-residue chain is Cytochrome P450 3A30 (496 aa).

Cysteine 441 is a heme binding site.

It belongs to the cytochrome P450 family. The cofactor is heme. In terms of tissue distribution, highly expressed in liver and intestine. Moderate expression in gill and spleen. Low expression in kidney, brain and heart.

It localises to the endoplasmic reticulum membrane. Its subcellular location is the microsome membrane. The enzyme catalyses an organic molecule + reduced [NADPH--hemoprotein reductase] + O2 = an alcohol + oxidized [NADPH--hemoprotein reductase] + H2O + H(+). Its function is as follows. Putative steroid 6-beta-hydroxylase. The protein is Cytochrome P450 3A30 (cyp3a30) of Fundulus heteroclitus (Killifish).